Here is a 505-residue protein sequence, read N- to C-terminus: MSQHVMFNAVLSSHPALFIQGEWRIGNGVSFEKQDPMSQQRLWQARAADHTDVTLACHAARAAFPAWARASLEQRATVIQQFAALLEQHKQSLARTISLETSKPYWETLTEVQAMIGKVAISLQAYQTRTGHSQTPMGDSMSVLRHRPHGVLAVFGPYNFPGHLPNGHIVPALLAGNTVVFKPSELTPWTAEETVKLWQQAGIPDGVLNLVQGGRETGEALAAQPDIDGLLFTGSAHTGYHLHRQLAGQPEKMLALEMGGNNALIVEQVKDRDAVVNLAIQSAFISAGQRCTCSRRLLVKTGAEGDAFLLRFTAVAQALRIGRWDEQPAPFMGAVISSQAAERMLAAQQHLLLLGGESLLNMTRPDSQSALLTPGIIDITNISEVPDEEYFGPLVSVIRYTDFTEALKIANQTRFGLAVGLVSEDRQQFEQLLLEARAGIVNWNKPLTGASSAAPFGGVGASGNHRPSAFYAADYCAWPMASLECEHLTLPATLSPGISFDLPKV.

An NAD(+)-binding site is contributed by 234 to 239 (GSAHTG). Catalysis depends on residues Glu-257 and Cys-291.

This sequence belongs to the aldehyde dehydrogenase family. AstD subfamily.

It carries out the reaction N-succinyl-L-glutamate 5-semialdehyde + NAD(+) + H2O = N-succinyl-L-glutamate + NADH + 2 H(+). It functions in the pathway amino-acid degradation; L-arginine degradation via AST pathway; L-glutamate and succinate from L-arginine: step 4/5. In terms of biological role, catalyzes the NAD-dependent reduction of succinylglutamate semialdehyde into succinylglutamate. The chain is N-succinylglutamate 5-semialdehyde dehydrogenase from Yersinia pestis bv. Antiqua (strain Antiqua).